The chain runs to 198 residues: B9 domain-containing protein 1 (198 aa).

The C2 B9-type domain maps to 8–126; the sequence is FLLNVSGQIE…TIPMFVPESS (119 aa).

Belongs to the B9D family. As to quaternary structure, part of the tectonic-like complex (also named B9 complex).

The protein localises to the cytoplasm. The protein resides in the cytoskeleton. Its subcellular location is the cilium basal body. Functionally, component of the tectonic-like complex, a complex localized at the transition zone of primary cilia and acting as a barrier that prevents diffusion of transmembrane proteins between the cilia and plasma membranes. Required for ciliogenesis and sonic hedgehog/SHH signaling. The polypeptide is B9 domain-containing protein 1 (b9d1) (Xenopus laevis (African clawed frog)).